The primary structure comprises 320 residues: Myeloid-associated differentiation marker (320 aa).

MARVEL domains lie at 25–157 (ALTQ…ARPG) and 162–317 (YMAT…RLVF). 8 helical membrane passes run 35–55 (LLQL…GAWT), 61–81 (WAMF…IVEL), 95–115 (FPIT…IIYP), 131–151 (AIAA…EVAW), 165–185 (TVPG…FAFI), 197–217 (LEWC…TILL), 233–253 (FLSG…VLWP), and 292–312 (LAVS…LVYS).

The protein belongs to the MAL family.

It is found in the membrane. The polypeptide is Myeloid-associated differentiation marker (Myadm) (Mus musculus (Mouse)).